We begin with the raw amino-acid sequence, 239 residues long: 7-cyano-7-deazaguanine synthase (239 aa).

13–23 (LSGGQDSATCL) contributes to the ATP binding site. Residues cysteine 199, cysteine 214, cysteine 217, and cysteine 220 each coordinate Zn(2+).

Belongs to the QueC family. The cofactor is Zn(2+).

The catalysed reaction is 7-carboxy-7-deazaguanine + NH4(+) + ATP = 7-cyano-7-deazaguanine + ADP + phosphate + H2O + H(+). It functions in the pathway purine metabolism; 7-cyano-7-deazaguanine biosynthesis. In terms of biological role, catalyzes the ATP-dependent conversion of 7-carboxy-7-deazaguanine (CDG) to 7-cyano-7-deazaguanine (preQ(0)). In Acidovorax ebreus (strain TPSY) (Diaphorobacter sp. (strain TPSY)), this protein is 7-cyano-7-deazaguanine synthase.